Here is a 1593-residue protein sequence, read N- to C-terminus: THO complex subunit 2 (1593 aa).

An anchor domain; interaction with THOC5 and THOC7 region spans residues 1–163; sequence MAAAAVVVPA…KLFYKQQKFN (163 aa). A bow domain; interaction with THOC1 dock domain and THOC3 region spans residues 164 to 534; it reads LLREENEGYA…GQWKNETYNS (371 aa). The tract at residues 322 to 341 is disordered; sequence KMDEREKEKEKEEEKVEKPP. An MIF4G domain; interaction with THOC3 and DDX39B region spans residues 535-686; sequence HPLLVKVKAQ…LILKEVVQKM (152 aa). The segment at 687–1174 is stern domain; the sequence is AGIEITEEMT…LAMGYSGQLK (488 aa). A coiled-coil region spans residues 896–965; sequence HTSYEREVNK…LKLEKDNWLL (70 aa). Positions 923-928 match the Nuclear localization signal motif; that stretch reads KKKKEK. The segment at 1175 to 1593 is charged domain; it reads SRKSYMIPEN…KHHKSSDKHR (419 aa). Positions 1184–1593 are disordered; that stretch reads NEFHHKDPPP…KHHKSSDKHR (410 aa). The span at 1218–1234 shows a compositional bias: basic and acidic residues; it reads KSDESSTEETDKSRERS. S1222 bears the Phosphoserine mark. Residues 1251 to 1263 are compositionally biased toward low complexity; it reads GNSSNGNSGSNSN. Composition is skewed to basic and acidic residues over residues 1265 to 1285, 1294 to 1343, and 1353 to 1383; these read AVKENDKEKGKEKEKEKKEKT, VLGK…EKFK, and STQEREREKEPSRERDIAKEMKSKENVKGGE. Residue T1385 is modified to Phosphothreonine. 3 positions are modified to phosphoserine: S1390, S1393, and S1417. Positions 1416–1425 are enriched in polar residues; that stretch reads PSPSHSSTVK. T1443 is subject to Phosphothreonine. The segment covering 1449–1504 has biased composition (basic and acidic residues); it reads KSKEREMDKKDLDKSRERSREREKKDEKDRKERKRDHSNNDREVPPDLTKRRKEEN. S1450, S1486, and S1516 each carry phosphoserine. Residues 1524–1582 show a composition bias toward basic and acidic residues; it reads NEKDKEKNKSKSSGKEKGSDSFKSEKMDKISSGGKKESRHDKEKIEKKEKRDSSGGKEE. Positions 1583 to 1593 are enriched in basic residues; that stretch reads KKHHKSSDKHR.

It belongs to the THOC2 family. As to quaternary structure, component of the THO subcomplex, which is composed of THOC1, THOC2, THOC3, THOC5, THOC6 and THOC7. The THO subcomplex interacts with DDX39B to form the THO-DDX39B complex which multimerizes into a 28-subunit tetrameric assembly. Component of the transcription/export (TREX) complex at least composed of ALYREF/THOC4, DDX39B, SARNP/CIP29, CHTOP and the THO subcomplex; in the complex interacts with THOC1, THOC3, THOC5, THOC7 and DDX39B. TREX seems to have a dynamic structure involving ATP-dependent remodeling. Interacts with POLDIP3 and ZC3H11A. Expressed in the hippocampus and the cerebral cortex.

The protein localises to the nucleus. It localises to the nucleus speckle. Its subcellular location is the cytoplasm. Component of the THO subcomplex of the TREX complex which is thought to couple mRNA transcription, processing and nuclear export, and which specifically associates with spliced mRNA and not with unspliced pre-mRNA. Required for efficient export of polyadenylated RNA and spliced mRNA. The THOC1-THOC2-THOC3 core complex alone is sufficient to bind export factor NXF1-NXT1 and promote ATPase activity of DDX39B; in the complex THOC2 is the only component that directly interacts with DDX39B. TREX is recruited to spliced mRNAs by a transcription-independent mechanism, binds to mRNA upstream of the exon-junction complex (EJC) and is recruited in a splicing- and cap-dependent manner to a region near the 5' end of the mRNA where it functions in mRNA export to the cytoplasm via the TAP/NXF1 pathway. Required for NXF1 localization to the nuclear rim. THOC2 (and probably the THO complex) is involved in releasing mRNA from nuclear speckle domains. Functionally, (Microbial infection) The TREX complex is essential for the export of Kaposi's sarcoma-associated herpesvirus (KSHV) intronless mRNAs and infectious virus production. This is THO complex subunit 2 (THOC2) from Homo sapiens (Human).